The primary structure comprises 605 residues: Hepatocyte nuclear factor 1-alpha-A (605 aa).

Residues 1–31 (MASQLSYLQRELLQALLESGVTKEALKKALA) form a dimerization region. In terms of domain architecture, HNF-p1 spans 1–32 (MASQLSYLQRELLQALLESGVTKEALKKALAD). Residues 57–81 (QLPNGLGESHISEDESSDDGEDFTP) form a disordered region. The POU-specific atypical domain maps to 85-180 (KELERLSPEE…IARLFTFTEF (96 aa)). Interaction with DNA stretches follow at residues 128-130 (QRE), 141-147 (HLSQHLN), 153-156 (KTQK), 206-209 (RFKW), 266-268 (RVY), and 273-276 (NRRK). The short motif at 200–208 (KKMRRNRFK) is the Nuclear localization signal element. A DNA-binding region (homeobox; HNF1-type) is located at residues 202–282 (MRRNRFKWGP…NRRKEEAFRH (81 aa)). Positions 321-335 (DRSAVMANSQSTPSP) are enriched in polar residues. The interval 321 to 343 (DRSAVMANSQSTPSPSALEPSHS) is disordered. Residues 448–453 (PSHQLH) are not present in other members of the HNF1 family.

It belongs to the HNF1 homeobox family. Binds DNA as dimer. Forms a homodimer or heterodimer with HNF1-alpha-B. Potentially also form a heterodimer with HNF1-beta. Protein expressed in liver, stomach, small intestine, colon and kidney. Not expressed in spleen, lung, blood, heart muscle, skeletal muscle, testis and brain.

It localises to the nucleus. Functionally, transcriptional activator that regulates the tissue specific expression of multiple genes, especially in pancreas and liver. Binds to the hepatocyte specific promoter element HP1. Binds to the inverted palindrome 5'-GTTAATNATTAAC-3'. This chain is Hepatocyte nuclear factor 1-alpha-A (hnf1a-a), found in Xenopus laevis (African clawed frog).